A 240-amino-acid polypeptide reads, in one-letter code: Probable transcriptional regulatory protein OEOE_0768 (240 aa).

Positions 1–21 are disordered; that stretch reads MSGHSKWHNIQGRKNAQDAKR.

This sequence belongs to the TACO1 family.

Its subcellular location is the cytoplasm. The sequence is that of Probable transcriptional regulatory protein OEOE_0768 from Oenococcus oeni (strain ATCC BAA-331 / PSU-1).